The sequence spans 443 residues: Squalene synthase (443 aa).

The next 2 helical transmembrane spans lie at 291 to 311 and 423 to 443; these read TSFN…ELVF and ILLL…VRII.

It belongs to the phytoene/squalene synthase family. Mg(2+) serves as cofactor.

Its subcellular location is the endoplasmic reticulum membrane. It carries out the reaction 2 (2E,6E)-farnesyl diphosphate + NADPH + H(+) = squalene + 2 diphosphate + NADP(+). The catalysed reaction is 2 (2E,6E)-farnesyl diphosphate + NADH + H(+) = squalene + 2 diphosphate + NAD(+). It functions in the pathway terpene metabolism; lanosterol biosynthesis; lanosterol from farnesyl diphosphate: step 1/3. Catalyzes the condensation of 2 two farnesyl pyrophosphate moieties to form squalene. It is the first committed enzyme of the sterol biosynthesis pathway. Required for the biosynthesis of ergosterol. The sequence is that of Squalene synthase (ERG9) from Cyberlindnera jadinii (Torula yeast).